The sequence spans 546 residues: MSAKEVRFSDDARSRMVRGVNVLANAVKVTLGPKGRNVVLEKSFGAPTVTKDGVSVAKEIELEDKFENMGAQMVKEVSSQTSDIAGDGTTTATVLAQAIVREGMKSVTAGMNPMDLKRGIDKAVIAAVEELKKLSKPCTDSKAIAQVGTISANSDESIGQIIADAMAKVGKEGVITVEEGSSLENELDVVEGMQFDRGYLSPYFVNNQQNMSAELDDCFVLLYDKKISNIRDLLPVLEGVAKAGKPLLIIAEDIEGEALATLVVNTIRGIVKVAAVKAPGFGDRRKAMLQDIAILTGGQVISEEVGLSLEKASLDDLGQAKRIVVTKENSTIIDGAGKPDEIKGRVEQIRAQIEDATSDYDKEKLQERVAKLAGGVAVIKVGAATEVEMKEKKARVEDALHATRAAVEEGVVPGGGVALVRALQALKSLKGANHDQDIGIAIARRAMEEPLRQIVSNCGEEPSVVLNNVVEGKGNYGYNAATGEYGDMIEMGILDPTKVTRSALQNAASVSGLIITTEAMVAELPKKGDSAPAGGGMGDMGGMGMM.

Residues 30-33, Lys51, 87-91, Gly415, 479-481, and Asp495 each bind ATP; these read TLGP, DGTTT, and NAA. The tract at residues 526 to 546 is disordered; that stretch reads KKGDSAPAGGGMGDMGGMGMM. Positions 533–546 are enriched in gly residues; the sequence is AGGGMGDMGGMGMM.

It belongs to the chaperonin (HSP60) family. As to quaternary structure, forms a cylinder of 14 subunits composed of two heptameric rings stacked back-to-back. Interacts with the co-chaperonin GroES.

It localises to the cytoplasm. It catalyses the reaction ATP + H2O + a folded polypeptide = ADP + phosphate + an unfolded polypeptide.. In terms of biological role, together with its co-chaperonin GroES, plays an essential role in assisting protein folding. The GroEL-GroES system forms a nano-cage that allows encapsulation of the non-native substrate proteins and provides a physical environment optimized to promote and accelerate protein folding. This chain is Chaperonin GroEL, found in Thioalkalivibrio sulfidiphilus (strain HL-EbGR7).